Reading from the N-terminus, the 363-residue chain is Branched-chain-amino-acid aminotransferase 2 (363 aa).

Lys-197 carries the post-translational modification N6-(pyridoxal phosphate)lysine.

Belongs to the class-IV pyridoxal-phosphate-dependent aminotransferase family. It depends on pyridoxal 5'-phosphate as a cofactor.

It carries out the reaction L-leucine + 2-oxoglutarate = 4-methyl-2-oxopentanoate + L-glutamate. The enzyme catalyses L-isoleucine + 2-oxoglutarate = (S)-3-methyl-2-oxopentanoate + L-glutamate. It catalyses the reaction L-valine + 2-oxoglutarate = 3-methyl-2-oxobutanoate + L-glutamate. Its pathway is amino-acid biosynthesis; L-isoleucine biosynthesis; L-isoleucine from 2-oxobutanoate: step 4/4. The protein operates within amino-acid biosynthesis; L-leucine biosynthesis; L-leucine from 3-methyl-2-oxobutanoate: step 4/4. It functions in the pathway amino-acid biosynthesis; L-valine biosynthesis; L-valine from pyruvate: step 4/4. Its activity is regulated as follows. Inhibited by canaline. In terms of biological role, transaminates branched-chain amino acids and ketoglutarate. The chain is Branched-chain-amino-acid aminotransferase 2 (ilvK) from Bacillus subtilis (strain 168).